Reading from the N-terminus, the 208-residue chain is Riboflavin synthase (208 aa).

2 Lumazine-binding repeats span residues 1-97 (MFTG…MGGH) and 98-195 (IISG…VDTT). 2,4-dihydroxypteridine is bound by residues 4–6 (GIV), 48–50 (CLT), 62–67 (DIMKIT), 101–103 (GHI), lysine 137, 146–148 (SLT), and 160–165 (SIIPET).

As to quaternary structure, homotrimer.

It carries out the reaction 2 6,7-dimethyl-8-(1-D-ribityl)lumazine + H(+) = 5-amino-6-(D-ribitylamino)uracil + riboflavin. It participates in cofactor biosynthesis; riboflavin biosynthesis; riboflavin from 2-hydroxy-3-oxobutyl phosphate and 5-amino-6-(D-ribitylamino)uracil: step 2/2. Functionally, catalyzes the dismutation of two molecules of 6,7-dimethyl-8-ribityllumazine, resulting in the formation of riboflavin and 5-amino-6-(D-ribitylamino)uracil. The sequence is that of Riboflavin synthase (ribE) from Buchnera aphidicola subsp. Schizaphis graminum (strain Sg).